Reading from the N-terminus, the 145-residue chain is Small ribosomal subunit protein eS19 (145 aa).

At Lys-23 the chain carries N6-acetyllysine. Arg-67 carries the omega-N-methylarginine modification. Lys-111 and Lys-115 each carry N6-acetyllysine. Lys-143 is modified (N6-succinyllysine).

This sequence belongs to the eukaryotic ribosomal protein eS19 family. In terms of assembly, component of the small ribosomal subunit. Part of the small subunit (SSU) processome, composed of more than 70 proteins and the RNA chaperone small nucleolar RNA (snoRNA) U3. Interacts with RPS19BP1.

It is found in the cytoplasm. The protein localises to the nucleus. It localises to the nucleolus. Component of the small ribosomal subunit. The ribosome is a large ribonucleoprotein complex responsible for the synthesis of proteins in the cell. Required for pre-rRNA processing and maturation of 40S ribosomal subunits. Part of the small subunit (SSU) processome, first precursor of the small eukaryotic ribosomal subunit. During the assembly of the SSU processome in the nucleolus, many ribosome biogenesis factors, an RNA chaperone and ribosomal proteins associate with the nascent pre-rRNA and work in concert to generate RNA folding, modifications, rearrangements and cleavage as well as targeted degradation of pre-ribosomal RNA by the RNA exosome. The protein is Small ribosomal subunit protein eS19 (Rps19) of Rattus norvegicus (Rat).